A 342-amino-acid chain; its full sequence is Signaling lymphocytic activation molecule (342 aa).

The first 26 residues, 1-26 (MDSRGFLSLRCLLVLALASKLSCGTG), serve as a signal peptide directing secretion. At 27–237 (ESLMNCPEVP…CRPESSVPRQ (211 aa)) the chain is on the extracellular side. The Ig-like V-type domain maps to 29–138 (LMNCPEVPGK…QHFCLQLKLY (110 aa)). Asparagine 57, asparagine 102, asparagine 125, asparagine 150, asparagine 157, asparagine 189, and asparagine 217 each carry an N-linked (GlcNAc...) asparagine glycan. Positions 144–223 (PEIKVLNWTQ…PVSNRSWSFN (80 aa)) constitute an Ig-like C2-type domain. Disulfide bonds link cysteine 158/cysteine 228 and cysteine 164/cysteine 209. The chain crosses the membrane as a helical span at residues 238–261 (WRLYAGLFLGGIVGVILIFEVVLL). The Cytoplasmic portion of the chain corresponds to 262 to 342 (LLRRRGKTNH…VYASVTFPES (81 aa)). The ITSM 1 motif lies at 282-287 (TIYAQV). Phosphotyrosine; by FYN is present on residues tyrosine 284, tyrosine 310, and tyrosine 334. The SH2-binding motif lies at 310–315 (YVAATE). An ITSM 2 motif is present at residues 332–337 (TVYASV).

Interacts (via cytoplasmic domain) with SH2D1A and SH2D1B; SH2D1A mediates association with FYN. Interacts (via cytoplasmic domain phosphorylated on tyrosine residues) with INPP5D and PTPN11; presence of SH2D1A facilitates binding to INPP5D. Interacts with MAP4K1. Interacts with PIK3C3, BECN1 and UVRAG; indicative for an association with PI3K complex II (PI3KC3-C2). Interacts with canine distemper virus HN protein; suggesting that it may serve as a receptor. In terms of processing, phosphorylated on tyrosine residues by FYN.

It is found in the cell membrane. In terms of biological role, self-ligand receptor of the signaling lymphocytic activation molecule (SLAM) family. SLAM receptors triggered by homo- or heterotypic cell-cell interactions are modulating the activation and differentiation of a wide variety of immune cells and thus are involved in the regulation and interconnection of both innate and adaptive immune response. Activities are controlled by presence or absence of small cytoplasmic adapter proteins, SH2D1A/SAP and/or SH2D1B/EAT-2. SLAMF1-induced signal-transduction events in T-lymphocytes are different from those in B-cells. Two modes of SLAMF1 signaling seem to exist: one depending on SH2D1A (and perhaps SH2D1B) and another in which protein-tyrosine phosphatase 2C (PTPN11)-dependent signal transduction operates. Initially it has been proposed that association with SH2D1A prevents binding to inhibitory effectors including INPP5D/SHIP1 and PTPN11/SHP-2. However, signaling is also regulated by SH2D1A which can simultaneously interact with and recruit FYN which subsequently phosphorylates and activates SLAMF1. Mediates IL-2-independent proliferation of activated T cells during immune responses and induces IFN-gamma production. Downstreaming signaling involves INPP5D/SHIP1, DOK1 and DOK2 leading to inhibited IFN-gamma production in T-cells, and PRKCQ, BCL10 and NFKB1 leading to increased T-cell activation and Th2 cytokine production. Promotes T-cell receptor-induced IL-4 secretion by CD4(+) cells. Inhibits antigen receptor-mediated production of IFN-gamma, but not IL-2, in CD4(-)/CD8(-) T-cells. Required for IL-4 production by germinal centers T follicular helper (T(Fh))cells. May inhibit CD40-induced signal transduction in monocyte-derived dendritic cells. May play a role in allergic responses and may regulate allergen-induced Th2 cytokine and Th1 cytokine secretion. In conjunction with SLAMF6 controls the transition between positive selection and the subsequent expansion and differentiation of the thymocytic natural killer T (NKT) cell lineage. Involved in the peripheral differentiation of indifferent natural killer T (iNKT) cells toward a regulatory NKT2 type. In macrophages involved in down-regulation of IL-12, TNF-alpha and nitric oxide in response to lipopolysaccharide (LPS). In B-cells activates the ERK signaling pathway independently of SH2D1A but implicating both, SYK and INPP5D, and activates Akt signaling dependent on SYK and SH2D1A. In conjunction with SLAMF5 and SLAMF6 may be a negative regulator of the humoral immune response. This is Signaling lymphocytic activation molecule (SLAMF1) from Canis lupus familiaris (Dog).